The chain runs to 204 residues: Allatotropin (204 aa).

Residues 1–20 form the signal peptide; sequence MNLTMQLAVIVAVCLCLAEG. Positions 21-35 are excised as a propeptide; sequence APDVRLTRTKQQRPT. The segment at 47 to 83 is disordered; it reads RGFGKRDRPHPRAERDVDHQAPSARPNRGTPTFKSPT. Phenylalanine 49 is modified (phenylalanine amide). Residues 50–65 are compositionally biased toward basic and acidic residues; it reads GKRDRPHPRAERDVDH. Positions 53–204 are excised as a propeptide; the sequence is DRPHPRAERD…LSSEELLRNF (152 aa).

In terms of tissue distribution, expressed extensively in the brain, frontal ganglion and terminal ganglion of the day 2 fifth instar larva (at protein level). Not expressed in the larval brain after day 4 of the fifth instar, or in the brain of the pupa or adult. Expression in the terminal ganglion is localized to cells in the posterior portion of the seventh neuromere of day 2 fifth instar larvae. In the pupa and adult expression is detected in the medial region of neuromere 6, the dorsal medial region of neuromere 7, and the posterior neuromere of the terminal ganglion (at protein level). In the frontal ganglion expression decreases in the wandering larvae and is present at low levels in during pupal ecdysis, but is not detected in the adult. Expressed in the subesophageal ganglion of day 2 fifth instar larva, but not at any time before or after day 2. Not expressed in the abdominal ganglia 1-6 of the day 2 fifth instar larva (at protein level). Expressed in the anterior neuromeres of the pterothoracic ganglion in pupa but not in adult (at protein level). Expressed in the unfused abdominal ganglia of day 10 pupae, and in pharate adult is expressed in median neurosecretory cells M1, M2 and M5, but not in median neurosecretory cells M3 and M4 (at protein level). Not expressed in the differentiated median neurosecretory cells M5 of the larva (at protein level). In the pharate adult brain isoform 3 is the predominant form, with lower levels of isoform 2 and very low levels of isoform 1 detected. In the pharate adult nerve cord isoform 3 is the predominant form, with lower levels of isoform 2 and no isoform 1 detected. In the pharate adult frontal ganglion isoform 3 is expressed, but not isoform 1 and isoform 2.

The protein localises to the secreted. Neuropeptide stimulator of juvenile hormone synthesis. Cardioregulatory neurohormone that increases heart beat rate in the adult but not in the larva. Inhibits active ion transport in the midgut of feeding fourth instar and day 2 fifth instar larva, but not in the midgut of pharate or wandering fifth instar larva. The polypeptide is Allatotropin (Manduca sexta (Tobacco hawkmoth)).